We begin with the raw amino-acid sequence, 376 residues long: Flagellin B (376 aa).

Residues 103-130 adopt a coiled-coil conformation; sequence SNSSSERQAIQEEVSALNDELNRIAETT.

This sequence belongs to the bacterial flagellin family. In terms of assembly, heteromer of multiple flagellin subunits including FlaA, FlaB, FlaC, FlaD and possibly FlaE.

The protein localises to the secreted. It localises to the bacterial flagellum. Functionally, flagellin is the subunit protein which polymerizes to form the filaments of bacterial flagella. FlaB is not essential for flagellar synthesis and motility. This is Flagellin B (flaB) from Vibrio anguillarum (Listonella anguillarum).